The following is a 360-amino-acid chain: NAD(P)H-quinone oxidoreductase subunit 1, chloroplastic (360 aa).

The next 9 helical transmembrane spans lie at isoleucine 27–isoleucine 47, phenylalanine 98–phenylalanine 118, isoleucine 129–glycine 149, alanine 165–leucine 185, phenylalanine 203–leucine 223, tyrosine 248–serine 268, leucine 269–leucine 289, isoleucine 297–isoleucine 317, and phenylalanine 340–leucine 360.

This sequence belongs to the complex I subunit 1 family. NDH is composed of at least 16 different subunits, 5 of which are encoded in the nucleus.

It localises to the plastid. The protein localises to the chloroplast thylakoid membrane. It catalyses the reaction a plastoquinone + NADH + (n+1) H(+)(in) = a plastoquinol + NAD(+) + n H(+)(out). The enzyme catalyses a plastoquinone + NADPH + (n+1) H(+)(in) = a plastoquinol + NADP(+) + n H(+)(out). NDH shuttles electrons from NAD(P)H:plastoquinone, via FMN and iron-sulfur (Fe-S) centers, to quinones in the photosynthetic chain and possibly in a chloroplast respiratory chain. The immediate electron acceptor for the enzyme in this species is believed to be plastoquinone. Couples the redox reaction to proton translocation, and thus conserves the redox energy in a proton gradient. The protein is NAD(P)H-quinone oxidoreductase subunit 1, chloroplastic of Olimarabidopsis pumila (Dwarf rocket).